The following is a 678-amino-acid chain: Glycine--tRNA ligase beta subunit (678 aa).

The protein belongs to the class-II aminoacyl-tRNA synthetase family. Tetramer of two alpha and two beta subunits.

Its subcellular location is the cytoplasm. The catalysed reaction is tRNA(Gly) + glycine + ATP = glycyl-tRNA(Gly) + AMP + diphosphate. The chain is Glycine--tRNA ligase beta subunit from Streptococcus thermophilus (strain ATCC BAA-491 / LMD-9).